Reading from the N-terminus, the 772-residue chain is Endoplasmic reticulum membrane sensor NFE2L1 (772 aa).

The chain crosses the membrane as a helical; Signal-anchor for type II membrane protein span at residues 7–24; that stretch reads YLTEGLLQFTILLSLIGV. Positions 108–148 are disordered; sequence DPEGSVSGSQPNSGLALESSSGLQDVTGPDNGVRESETEQG. Residues 113 to 131 are compositionally biased toward polar residues; it reads VSGSQPNSGLALESSSGLQ. Positions 191–199 are cholesterol recognition/amino acid consensus (CRAC) region; sequence VFDYSHRQK. N-linked (GlcNAc...) asparagine glycans are attached at residues N348 and N360. Residues 379–383 form a CPD region; that stretch reads SPEVE. N-linked (GlcNAc...) asparagine glycans are attached at residues N412 and N423. Disordered stretches follow at residues 470 to 532 and 582 to 613; these read EEEF…DSET and SALDSADLPPPSALKKGSKEKQADFLDKQMSR. Positions 476 to 480 match the Destruction motif motif; the sequence is DSGLS. Low complexity predominate over residues 476-523; that stretch reads DSGLSLDSSHSPSSLSSSEGSSSSSSSSSSSSSSASSSASSSFSEEGA. Residue S528 is modified to Phosphoserine; by CK2. Basic and acidic residues predominate over residues 598-613; the sequence is GSKEKQADFLDKQMSR. S599 is subject to Phosphoserine; by PKA. In terms of domain architecture, bZIP spans 654–717; sequence LIRDIRRRGK…RQMKQKVQSL (64 aa). Residues 656-675 are basic motif; that stretch reads RDIRRRGKNKMAAQNCRKRK. Residues 682 to 696 are leucine-zipper; sequence LERDVEDLQRDKARL.

The protein belongs to the bZIP family. CNC subfamily. In terms of assembly, interacts with KEAP1. Interacts (via CPD region) with FBXW7; leading to its ubiquitination and degradation. Interacts with SYVN1/HRD1; leading to its ubiquitination and degradation. Interacts (when ubiquitinated) with DDI2; leading to its cleavage. As to quaternary structure, interacts (via the bZIP domain) with small MAF protein (MAFF, MAFG or MAFK); required for binding to antioxidant response elements (AREs) on DNA. Interacts (via Destruction motif) with BTRC; leading to its ubiquitination and degradation. Interacts with CEBPB; the heterodimer represses expression of DSPP during odontoblast differentiation. Interacts with MOTS-c, a peptide produced by the mitochondrially encoded 12S rRNA MT-RNR1. Post-translationally, cleaved at Leu-104 by the aspartyl protease DDI2 following retrotranslocation, releasing the protein from the endoplasmic reticulum membrane and forming the transcription factor NRF1 that translocates into the nucleus. Ubiquitination is prerequisite for cleavage by aspartyl protease DDI2. In terms of processing, N-glycosylated in normal conditions, when it has a single-pass type II membrane protein topology, with the DNA-binding domain facing the endoplasmic reticulum lumen. Deglycosylated during retrotranslocation to the cytosolic side of the membrane, to have a single-pass type III membrane protein topology with the major part of the protein facing the cytosol. Ubiquitinated by the SCF(FBXW7) complex and SYVN1/HRD1, leading to its degradation by the proteasome. Ubiquitinated during retrotranslocation to the cytosolic side of the membrane: ubiquitination does not lead to degradation and is required for processing by the aspartyl protease DDI2 and subsequent release from the endoplasmic reticulum membrane. Post-translationally, phosphorylation by CK2 at Ser-528 inhibits transcription factor activity, possibly by affecting DNA-binding activity. Phosphorylation at Ser-599 is required for interaction with CEBPB. In terms of processing, ubiquitinated by the SCF(BTRC) complex in the nucleus, leading to its degradation by the proteasome.

It is found in the endoplasmic reticulum membrane. The protein resides in the nucleus. Its function is as follows. Endoplasmic reticulum membrane sensor that translocates into the nucleus in response to various stresses to act as a transcription factor. Constitutes a precursor of the transcription factor NRF1. Able to detect various cellular stresses, such as cholesterol excess, oxidative stress or proteasome inhibition. In response to stress, it is released from the endoplasmic reticulum membrane following cleavage by the protease DDI2 and translocates into the nucleus to form the transcription factor NRF1. Acts as a key sensor of cholesterol excess: in excess cholesterol conditions, the endoplasmic reticulum membrane form of the protein directly binds cholesterol via its CRAC motif, preventing cleavage and release of the transcription factor NRF1, thereby allowing expression of genes promoting cholesterol removal, such as CD36. Involved in proteasome homeostasis: in response to proteasome inhibition, it is released from the endoplasmic reticulum membrane, translocates to the nucleus and activates expression of genes encoding proteasome subunits. CNC-type bZIP family transcription factor that translocates to the nucleus and regulates expression of target genes in response to various stresses. Heterodimerizes with small-Maf proteins (MAFF, MAFG or MAFK) and binds DNA motifs including the antioxidant response elements (AREs), which regulate expression of genes involved in oxidative stress response. Activates or represses expression of target genes, depending on the context. Plays a key role in cholesterol homeostasis by acting as a sensor of cholesterol excess: in low cholesterol conditions, translocates into the nucleus and represses expression of genes involved in defense against cholesterol excess, such as CD36. In excess cholesterol conditions, the endoplasmic reticulum membrane form of the protein directly binds cholesterol via its CRAC motif, preventing cleavage and release of the transcription factor NRF1, thereby allowing expression of genes promoting cholesterol removal. Critical for redox balance in response to oxidative stress: acts by binding the AREs motifs on promoters and mediating activation of oxidative stress response genes, such as GCLC, GCLM, GSS, MT1 and MT2. Plays an essential role during fetal liver hematopoiesis: probably has a protective function against oxidative stress and is involved in lipid homeostasis in the liver. Involved in proteasome homeostasis: in response to proteasome inhibition, mediates the 'bounce-back' of proteasome subunits by translocating into the nucleus and activating expression of genes encoding proteasome subunits. Also involved in regulating glucose flux. Together with CEBPB; represses expression of DSPP during odontoblast differentiation. In response to ascorbic acid induction, activates expression of SP7/Osterix in osteoblasts. This chain is Endoplasmic reticulum membrane sensor NFE2L1 (NFE2L1), found in Homo sapiens (Human).